A 397-amino-acid chain; its full sequence is Succinate--CoA ligase [ADP-forming] subunit beta (397 aa).

An ATP-grasp domain is found at 9–254 (KALLKSFGAP…KSEEDEKEIQ (246 aa)). Residues lysine 46, 53–55 (GRG), glutamate 109, alanine 112, and glutamate 117 each bind ATP. The Mg(2+) site is built by asparagine 209 and aspartate 223. Substrate contacts are provided by residues asparagine 274 and 331–333 (GIM).

The protein belongs to the succinate/malate CoA ligase beta subunit family. As to quaternary structure, heterotetramer of two alpha and two beta subunits. The cofactor is Mg(2+).

It carries out the reaction succinate + ATP + CoA = succinyl-CoA + ADP + phosphate. The enzyme catalyses GTP + succinate + CoA = succinyl-CoA + GDP + phosphate. It functions in the pathway carbohydrate metabolism; tricarboxylic acid cycle; succinate from succinyl-CoA (ligase route): step 1/1. Functionally, succinyl-CoA synthetase functions in the citric acid cycle (TCA), coupling the hydrolysis of succinyl-CoA to the synthesis of either ATP or GTP and thus represents the only step of substrate-level phosphorylation in the TCA. The beta subunit provides nucleotide specificity of the enzyme and binds the substrate succinate, while the binding sites for coenzyme A and phosphate are found in the alpha subunit. The polypeptide is Succinate--CoA ligase [ADP-forming] subunit beta (Rhizobium rhizogenes (strain K84 / ATCC BAA-868) (Agrobacterium radiobacter)).